The chain runs to 432 residues: Acyl-coenzyme A thioesterase 3 (432 aa).

Active-site charge relay system residues include Ser-243, Asp-337, and His-371. A Microbody targeting signal motif is present at residues 430-432; the sequence is AKL.

The protein belongs to the C/M/P thioester hydrolase family. As to expression, widely expressed. Highly expressed in the kidney, expressed at low level in the liver. Isoform 2 is expressed in the kidney, but not in the liver. Isoform 1 is liver-specific. Highly expressed in kidney (at protein level).

It localises to the peroxisome. The catalysed reaction is hexadecanoyl-CoA + H2O = hexadecanoate + CoA + H(+). The enzyme catalyses decanoyl-CoA + H2O = decanoate + CoA + H(+). It catalyses the reaction dodecanoyl-CoA + H2O = dodecanoate + CoA + H(+). It carries out the reaction tetradecanoyl-CoA + H2O = tetradecanoate + CoA + H(+). The catalysed reaction is octadecanoyl-CoA + H2O = octadecanoate + CoA + H(+). The enzyme catalyses eicosanoyl-CoA + H2O = eicosanoate + CoA + H(+). It catalyses the reaction (9Z)-octadecenoyl-CoA + H2O = (9Z)-octadecenoate + CoA + H(+). It carries out the reaction (9Z,12Z)-octadecadienoyl-CoA + H2O = (9Z,12Z)-octadecadienoate + CoA + H(+). The catalysed reaction is (5Z,8Z,11Z,14Z)-eicosatetraenoyl-CoA + H2O = (5Z,8Z,11Z,14Z)-eicosatetraenoate + CoA + H(+). The enzyme catalyses tetracosanoyl-CoA + H2O = tetracosanoate + CoA + H(+). It catalyses the reaction hexacosanoyl-CoA + H2O = hexacosanoate + CoA + H(+). It carries out the reaction docosanoyl-CoA + H2O = docosanoate + CoA + H(+). The catalysed reaction is (9Z)-hexadecenoyl-CoA + H2O = (9Z)-hexadecenoate + CoA + H(+). It participates in lipid metabolism; fatty acid metabolism. Functionally, catalyzes the hydrolysis of acyl-CoAs into free fatty acids and coenzyme A (CoASH), regulating their respective intracellular levels. Mainly active on long-chain acyl-CoAs. May have a function in termination of beta-oxidation of fatty acids. This is Acyl-coenzyme A thioesterase 3 (Acot3) from Mus musculus (Mouse).